The chain runs to 101 residues: Gene 30 protein (101 aa).

This is Gene 30 protein (30) from Mycobacterium phage L5 (Mycobacteriophage L5).